A 143-amino-acid chain; its full sequence is UPF0251 protein CA_C3166 (143 aa).

Belongs to the UPF0251 family.

The chain is UPF0251 protein CA_C3166 from Clostridium acetobutylicum (strain ATCC 824 / DSM 792 / JCM 1419 / IAM 19013 / LMG 5710 / NBRC 13948 / NRRL B-527 / VKM B-1787 / 2291 / W).